Consider the following 101-residue polypeptide: Small ribosomal subunit protein uS14 (101 aa).

Belongs to the universal ribosomal protein uS14 family. Part of the 30S ribosomal subunit. Contacts proteins S3 and S10.

Its function is as follows. Binds 16S rRNA, required for the assembly of 30S particles and may also be responsible for determining the conformation of the 16S rRNA at the A site. The polypeptide is Small ribosomal subunit protein uS14 (Chelativorans sp. (strain BNC1)).